Consider the following 389-residue polypeptide: Alkanesulfonate monooxygenase (389 aa).

Belongs to the SsuD family.

It catalyses the reaction an alkanesulfonate + FMNH2 + O2 = an aldehyde + FMN + sulfite + H2O + 2 H(+). Catalyzes the desulfonation of aliphatic sulfonates. This chain is Alkanesulfonate monooxygenase, found in Agrobacterium fabrum (strain C58 / ATCC 33970) (Agrobacterium tumefaciens (strain C58)).